We begin with the raw amino-acid sequence, 369 residues long: Aspartate-semialdehyde dehydrogenase (369 aa).

Residues 11–14 (RGMV), 38–39 (TS), and Q75 each bind NADP(+). A phosphate-binding site is contributed by R104. Catalysis depends on C137, which acts as the Acyl-thioester intermediate. Q164 is a binding site for substrate. Residues 167-168 (SG) and P195 each bind NADP(+). E243 contacts substrate. K246 provides a ligand contact to phosphate. Position 269 (R269) interacts with substrate. H276 acts as the Proton acceptor in catalysis. Residue Q352 coordinates NADP(+).

Belongs to the aspartate-semialdehyde dehydrogenase family. As to quaternary structure, homodimer.

The catalysed reaction is L-aspartate 4-semialdehyde + phosphate + NADP(+) = 4-phospho-L-aspartate + NADPH + H(+). Its pathway is amino-acid biosynthesis; L-lysine biosynthesis via DAP pathway; (S)-tetrahydrodipicolinate from L-aspartate: step 2/4. It functions in the pathway amino-acid biosynthesis; L-methionine biosynthesis via de novo pathway; L-homoserine from L-aspartate: step 2/3. It participates in amino-acid biosynthesis; L-threonine biosynthesis; L-threonine from L-aspartate: step 2/5. Its function is as follows. Catalyzes the NADPH-dependent formation of L-aspartate-semialdehyde (L-ASA) by the reductive dephosphorylation of L-aspartyl-4-phosphate. This Buchnera aphidicola subsp. Baizongia pistaciae (strain Bp) protein is Aspartate-semialdehyde dehydrogenase.